A 201-amino-acid chain; its full sequence is 3-isopropylmalate dehydratase small subunit (201 aa).

This sequence belongs to the LeuD family. LeuD type 1 subfamily. As to quaternary structure, heterodimer of LeuC and LeuD.

It catalyses the reaction (2R,3S)-3-isopropylmalate = (2S)-2-isopropylmalate. It functions in the pathway amino-acid biosynthesis; L-leucine biosynthesis; L-leucine from 3-methyl-2-oxobutanoate: step 2/4. Catalyzes the isomerization between 2-isopropylmalate and 3-isopropylmalate, via the formation of 2-isopropylmaleate. The polypeptide is 3-isopropylmalate dehydratase small subunit (Brucella anthropi (strain ATCC 49188 / DSM 6882 / CCUG 24695 / JCM 21032 / LMG 3331 / NBRC 15819 / NCTC 12168 / Alc 37) (Ochrobactrum anthropi)).